Reading from the N-terminus, the 297-residue chain is Chelated iron transport system membrane protein YfeD (297 aa).

8 consecutive transmembrane segments (helical) span residues 20-40 (AIVAAIVTGVVCAILSCYLVL), 58-78 (IVLAFWLGIPLVIGAFVSGIF), 96-116 (TVMGIVFSGMFAFGLVLFSRI), 133-153 (ISLTELKQTLWIAGFTLLVVL), 172-192 (IGLPVKFLHYGLLCLLALTIV), 197-217 (AVGVILVIAMLIAPGIIAFMI), 224-244 (MLVVATLVSVVACVLGTLISF), and 248-268 (GATGPCIVIIQALFFVVALIY).

Belongs to the ABC-3 integral membrane protein family.

It is found in the cell inner membrane. Part of an ATP-driven transport system YfeABCD for chelated iron. The sequence is that of Chelated iron transport system membrane protein YfeD (yfeD) from Yersinia pestis.